The chain runs to 923 residues: Serine/threonine-protein phosphatase 6 regulatory subunit 2 (923 aa).

The residue at position 289 (S289) is a Phosphoserine. Disordered regions lie at residues 409-441 (EASGSDGKVEPLQGSGDGNGKLETTPSITSPPE), 662-685 (VPGLAAPSSPTQKEGPRSESDSAG), and 743-766 (RCSSPVDMDHSNAEGGQSPGPEKT). A compositionally biased stretch (polar residues) spans 430-441 (LETTPSITSPPE). A phosphoserine mark is found at S746 and S796.

Belongs to the SAPS family. Protein phosphatase 6 (PP6) holoenzyme is proposed to be a heterotrimeric complex formed by the catalytic subunit, a SAPS domain-containing subunit (PP6R) and an ankyrin repeat-domain containing regulatory subunit (ARS). Interacts with PPP6C and NFKBIE. Interacts with ANKRD28. As to expression, strongest expression in bladder and lower levels found in heart and pancreas. Very weak expression observed in all other tissues tested.

It is found in the cytoplasm. Regulatory subunit of protein phosphatase 6 (PP6). May function as a scaffolding PP6 subunit. Involved in the PP6-mediated dephosphorylation of NFKBIE opposing its degradation in response to TNF-alpha. This is Serine/threonine-protein phosphatase 6 regulatory subunit 2 (Ppp6r2) from Mus musculus (Mouse).